The sequence spans 864 residues: Structure-specific endonuclease subunit SLX4 (864 aa).

8 disordered regions span residues 1–21 (MTTQ…PVIP), 49–69 (LSTS…KTQG), 91–113 (TGTG…PGNA), 161–190 (ANQT…GNDH), 289–318 (LSDD…NRPK), 346–385 (TLLS…NEPP), 413–433 (ANGH…ISNS), and 625–767 (KAPN…VTSS). Over residues 295-306 (SSITEDSESATS) the composition is skewed to polar residues. Positions 307-318 (KPRRVKAKNRPK) are enriched in basic residues. Polar residues predominate over residues 656 to 668 (QPNSISQKATTQV). The span at 685 to 695 (VSSRRSTSTSK) shows a compositional bias: low complexity. Over residues 743–767 (PESFNLPTTPLTIRSGKVPSTVTSS) the composition is skewed to polar residues.

This sequence belongs to the SLX4 family. In terms of assembly, forms a heterodimer with SLX1. In terms of processing, phosphorylated in response to DNA damage.

It localises to the nucleus. Functionally, regulatory subunit of the SLX1-SLX4 structure-specific endonuclease that resolves DNA secondary structures generated during DNA repair and recombination. Has endonuclease activity towards branched DNA substrates, introducing single-strand cuts in duplex DNA close to junctions with ss-DNA. The sequence is that of Structure-specific endonuclease subunit SLX4 from Paracoccidioides lutzii (strain ATCC MYA-826 / Pb01) (Paracoccidioides brasiliensis).